The primary structure comprises 370 residues: 2-aminoethylphosphonate--pyruvate transaminase (370 aa).

The residue at position 194 (K194) is an N6-(pyridoxal phosphate)lysine.

It belongs to the class-V pyridoxal-phosphate-dependent aminotransferase family. PhnW subfamily. Homodimer. The cofactor is pyridoxal 5'-phosphate.

It catalyses the reaction (2-aminoethyl)phosphonate + pyruvate = phosphonoacetaldehyde + L-alanine. Involved in phosphonate degradation. This chain is 2-aminoethylphosphonate--pyruvate transaminase, found in Paraburkholderia phymatum (strain DSM 17167 / CIP 108236 / LMG 21445 / STM815) (Burkholderia phymatum).